The sequence spans 83 residues: UPF0297 protein Moth_1643 (83 aa).

This sequence belongs to the UPF0297 family.

This chain is UPF0297 protein Moth_1643, found in Moorella thermoacetica (strain ATCC 39073 / JCM 9320).